The sequence spans 56 residues: Botcinic acid biosynthesis cluster B protein 14 (56 aa).

It participates in polyketide biosynthesis. Part of the gene cluster B that mediates the biosynthesis of botcinic acid and its botcinin derivatives, acetate-derived polyketides that contribute to virulence when combined with the sesquiterpene botrydial. Botcinic acid and its derivatives have been shown to induce chlorosis and necrosis during host plant infection, but also have antifungal activities. Two polyketide synthases, BOA6 and BOA9, are involved in the biosynthesis of botcinins. BOA6 mediates the formation of the per-methylated tetraketide core by condensation of four units of malonyl-CoA with one unit of acetyl-CoA, which would be methylated in activated methylene groups to yield a bicyclic acid intermediate that could then either be converted to botrylactone derivatives or lose the starter acetate unit through a retro-Claisen type C-C bond cleavage to yield botcinin derivatives. The second polyketide synthase, BOA9, is probably required for the biosynthesis of the tetraketide side chain of botcinins. The methyltransferase (MT) domain within BOA6 is probably responsible for the incorporation of four methyl groups. The trans-enoyl reductase BOA5 might take over the enoyl reductase function of BOA6 that misses an ER domain. The monooxygenases BOA2, BOA3 and BOA4 might be involved in further hydroxylations at C4, C5 and C8, whereas BOA7, close to BOA9, could potentially be involved in the hydroxylation at C4 in the side chain of botcinins. The chain is Botcinic acid biosynthesis cluster B protein 14 from Botryotinia fuckeliana (strain B05.10) (Noble rot fungus).